The following is a 1816-amino-acid chain: Nuclear pore complex protein Nup98-Nup96 (1816 aa).

Residues 1–156 form an FG repeats 1 region; that stretch reads MFNKSFGTPF…LFGPSSFTAA (156 aa). Positions 157 to 213 are GLEBS; interaction with RAE1; it reads PTGTTIKFNPPTGTDTMVKAGVSTNISTKHQCITAMKEYESKSLEELRLEDYQANRK. The tract at residues 214–480 is FG repeats 2; that stretch reads GPQNQVGAGT…NTSTAILGFG (267 aa). The disordered stretch occupies residues 512–535; that stretch reads PFGDSPLFRNPMSDPKKKEERLKP. Ser-524 carries the post-translational modification Phosphoserine. The span at 525–534 shows a compositional bias: basic and acidic residues; that stretch reads DPKKKEERLK. Lys-563 is covalently cross-linked (Glycyl lysine isopeptide (Lys-Gly) (interchain with G-Cter in SUMO2)). N6-acetyllysine; alternate is present on Lys-603. A Glycyl lysine isopeptide (Lys-Gly) (interchain with G-Cter in SUMO2); alternate cross-link involves residue Lys-603. 6 positions are modified to phosphoserine: Ser-608, Ser-612, Ser-618, Ser-623, Ser-625, and Ser-653. Residues 663–682 are disordered; sequence IAKPIPQTPESAGNKNNSSS. A Glycyl lysine isopeptide (Lys-Gly) (interchain with G-Cter in SUMO2) cross-link involves residue Lys-665. Residue Thr-670 is modified to Phosphothreonine. Residues 670 to 682 show a composition bias toward polar residues; that stretch reads TPESAGNKNNSSS. 4 positions are modified to phosphoserine: Ser-673, Ser-680, Ser-681, and Ser-839. Residues 738–880 enclose the Peptidase S59 domain; the sequence is KVGYYTIPSM…GSWVFKVSHF (143 aa). Ser-881 (nucleophile) is an active-site residue. Residues 886–937 are disordered; the sequence is QDSDEEEEEHPPKTTSKKLKTAPLPPAGQATTFQMTLNGKPAPPPQSQSPEV. Residues Ser-888, Ser-934, Ser-1027, Ser-1042, Ser-1059, and Ser-1063 each carry the phosphoserine modification. Residue Thr-1069 is modified to Phosphothreonine. Ser-1328 carries the post-translational modification Phosphoserine. Thr-1771 carries the post-translational modification Phosphothreonine.

The protein belongs to the nucleoporin GLFG family. In terms of assembly, part of the nuclear pore complex (NPC). Interacts directly with NUP96. Part of the Nup160 subcomplex in the nuclear pore which is composed of NUP160, NUP133, NUP107 and NUP96; this complex plays a role in RNA export and in tethering NUP98 and NUP153 to the nucleus. Interacts with RAE1. Does not interact with TPR. Interacts directly with NUP88 and NUP214, subunits of the cytoplasmic filaments of the NPC. Interacts (via N-terminus) with DHX9 (via DRBM, OB-fold and RGG domains); this interaction occurs in a RNA-dependent manner and stimulates DHX9-mediated ATPase activity. In terms of processing, the N-terminus is blocked. Post-translationally, isoform 1 is autoproteolytically cleaved to yield Nup98 and Nup96 or Nup98 only, respectively. Cleaved Nup98 is necessary for the targeting of Nup98 to the nuclear pore and the interaction with Nup96.

Its subcellular location is the nucleus membrane. The protein resides in the nucleus. It localises to the nuclear pore complex. The protein localises to the nucleoplasm. In terms of biological role, plays a role in the nuclear pore complex (NPC) assembly and/or maintenance. Involved in the bidirectional transport across the NPC. May anchor NUP153 and TPR to the NPC. Its function is as follows. Plays a role in the nuclear pore complex (NPC) assembly and/or maintenance. NUP98 and NUP96 are involved in the bidirectional transport across the NPC. May anchor NUP153 and TPR to the NPC. In cooperation with DHX9, plays a role in transcription and alternative splicing activation of a subset of genes. Involved in the localization of DHX9 in discrete intranuclear foci (GLFG-body). This is Nuclear pore complex protein Nup98-Nup96 (Nup98) from Rattus norvegicus (Rat).